A 109-amino-acid chain; its full sequence is Fluoride-specific ion channel FluC 1 (109 aa).

The next 4 helical transmembrane spans lie at 1–21 (MVIV…YFFS), 29–49 (LPLG…VFYN), 55–75 (EVYA…STLN), and 87–107 (VFYS…FLGI). The Na(+) site is built by Gly66 and Thr69.

This sequence belongs to the fluoride channel Fluc/FEX (TC 1.A.43) family.

It is found in the cell membrane. It carries out the reaction fluoride(in) = fluoride(out). With respect to regulation, na(+) is not transported, but it plays an essential structural role and its presence is essential for fluoride channel function. Fluoride-specific ion channel. Important for reducing fluoride concentration in the cell, thus reducing its toxicity. The protein is Fluoride-specific ion channel FluC 1 of Streptococcus pneumoniae (strain ATCC BAA-255 / R6).